The following is a 102-amino-acid chain: Small ribosomal subunit protein uS10 (102 aa).

Belongs to the universal ribosomal protein uS10 family. Part of the 30S ribosomal subunit.

In terms of biological role, involved in the binding of tRNA to the ribosomes. The polypeptide is Small ribosomal subunit protein uS10 (Paracoccus denitrificans (strain Pd 1222)).